A 591-amino-acid polypeptide reads, in one-letter code: Aspartate--tRNA ligase (591 aa).

Residue Glu172 participates in L-aspartate binding. Residues 196–199 are aspartate; it reads QLFK. Position 218 (Arg218) interacts with L-aspartate. ATP is bound by residues 218 to 220 and Gln227; that span reads RDE. His449 lines the L-aspartate pocket. Position 483 (Glu483) interacts with ATP. Arg490 contacts L-aspartate. Position 535–538 (535–538) interacts with ATP; it reads GLDR.

The protein belongs to the class-II aminoacyl-tRNA synthetase family. Type 1 subfamily. As to quaternary structure, homodimer.

The protein resides in the cytoplasm. It catalyses the reaction tRNA(Asp) + L-aspartate + ATP = L-aspartyl-tRNA(Asp) + AMP + diphosphate. Its function is as follows. Catalyzes the attachment of L-aspartate to tRNA(Asp) in a two-step reaction: L-aspartate is first activated by ATP to form Asp-AMP and then transferred to the acceptor end of tRNA(Asp). The polypeptide is Aspartate--tRNA ligase (Actinobacillus pleuropneumoniae serotype 5b (strain L20)).